Here is a 272-residue protein sequence, read N- to C-terminus: MTTLACRKLAPHPESPRHQHAGPWLVWLHGLLGSGQDWLPVAQLCGDYPSLLIDLPGHGQSVSLSADGFADISRQLSQTLQANGIREYWLAGYSLGGRIAIYHACYGRHHGLQGLLVEGGNLGLENAELRQARLQQDRQWAQRFRQEPLPQVLDDWYQQAVFADLDPQQREQLVLLRADNHGPAVAEMLEATSLGHQPWLLPALQRLNVPYTYLCGDRDHKFLQLAQQYRLPLHTLARAGHNAHRANPGAFAAQVLAFLSQSSCLPPSSLSR.

Belongs to the AB hydrolase superfamily. MenH family. Monomer.

It carries out the reaction 5-enolpyruvoyl-6-hydroxy-2-succinyl-cyclohex-3-ene-1-carboxylate = (1R,6R)-6-hydroxy-2-succinyl-cyclohexa-2,4-diene-1-carboxylate + pyruvate. The protein operates within quinol/quinone metabolism; 1,4-dihydroxy-2-naphthoate biosynthesis; 1,4-dihydroxy-2-naphthoate from chorismate: step 3/7. It functions in the pathway quinol/quinone metabolism; menaquinone biosynthesis. Its function is as follows. Catalyzes a proton abstraction reaction that results in 2,5-elimination of pyruvate from 2-succinyl-5-enolpyruvyl-6-hydroxy-3-cyclohexene-1-carboxylate (SEPHCHC) and the formation of 2-succinyl-6-hydroxy-2,4-cyclohexadiene-1-carboxylate (SHCHC). In Yersinia pestis (strain Pestoides F), this protein is 2-succinyl-6-hydroxy-2,4-cyclohexadiene-1-carboxylate synthase.